A 102-amino-acid chain; its full sequence is MQKARIKLSSTKHEELDSVCNQIKAIAEKTGVDMAGPIPLPTKSLKITTRKSTDGEGSSSFDRWTMRVHKRVIDIEADERTMKHIMKVRIPDAVQIEIELRS.

The disordered stretch occupies residues 37-61; it reads PIPLPTKSLKITTRKSTDGEGSSSF.

It belongs to the universal ribosomal protein uS10 family. As to quaternary structure, part of the 30S ribosomal subunit.

Involved in the binding of tRNA to the ribosomes. This is Small ribosomal subunit protein uS10 from Methanococcus vannielii (strain ATCC 35089 / DSM 1224 / JCM 13029 / OCM 148 / SB).